The primary structure comprises 161 residues: RNA pyrophosphohydrolase (161 aa).

One can recognise a Nudix hydrolase domain in the interval 9–155; the sequence is PYRPCVGVML…KRRVYRQVVD (147 aa). A Nudix box motif is present at residues 44–65; sequence GGIDDGEELHPAALRELSEETG.

It belongs to the Nudix hydrolase family. RppH subfamily. The cofactor is a divalent metal cation.

Its function is as follows. Accelerates the degradation of transcripts by removing pyrophosphate from the 5'-end of triphosphorylated RNA, leading to a more labile monophosphorylated state that can stimulate subsequent ribonuclease cleavage. The protein is RNA pyrophosphohydrolase of Novosphingobium aromaticivorans (strain ATCC 700278 / DSM 12444 / CCUG 56034 / CIP 105152 / NBRC 16084 / F199).